We begin with the raw amino-acid sequence, 1099 residues long: Contactin-5 (1099 aa).

An N-terminal signal peptide occupies residues 1–18 (MASSWRLILFLSFTSCLS). 6 consecutive Ig-like C2-type domains span residues 99–190 (PVFV…ATLQ), 196–282 (NFSG…RVLS), 300–385 (PKIE…GQLQ), 390–474 (PHWV…AELK), 480–569 (PSFE…VSVK), and 571–660 (PTRI…DSVS). A disulfide bridge links Cys-123 with Cys-173. N-linked (GlcNAc...) asparagine glycans are attached at residues Asn-138 and Asn-196. Disulfide bonds link Cys-217/Cys-269 and Cys-322/Cys-369. Residues Asn-397, Asn-449, and Asn-540 are each glycosylated (N-linked (GlcNAc...) asparagine). 3 cysteine pairs are disulfide-bonded: Cys-411–Cys-458, Cys-503–Cys-551, and Cys-593–Cys-650. Fibronectin type-III domains follow at residues 673–771 (PPGV…TNEA), 776–873 (APSN…SAEG), 878–972 (APTD…TKRH), and 977–1067 (PPGN…SYAG). Asn-779, Asn-816, and Asn-931 each carry an N-linked (GlcNAc...) asparagine glycan. Residues 958–983 (YGPPSREVSATTKRHPPSEPPGNLRW) form a disordered region. A glycan (N-linked (GlcNAc...) asparagine) is linked at Asn-1002. Ser-1072 carries the GPI-anchor amidated serine lipid modification. Positions 1073-1099 (AQSTLHSLSKWSSVTLLLALMLPSSSW) are cleaved as a propeptide — removed in mature form.

The protein belongs to the immunoglobulin superfamily. Contactin family. As to quaternary structure, interacts with PTPRG. As to expression, specifically expressed in the nervous system. Expressed in cerebrum and cerebellum but at low level in spinal cord. In brain, it is expressed in highly restricted regions at postnatal day 7, such as the auditory pathway, including the cochlear nucleus, superior olive, inferior colliculus, medial geniculate nucleus and auditory cortex. Expressed in the accessory olfactory bulb, glomerular and mitral cell layers in the olfactory bulb, anterior thalamic nuclei, layers II-IV of the cerebral cortex, dentate gyrus of the hippocampus and external granule cells and Purkinje cells of the cerebellum. Also expressed in the piriform cortex, inferior olive and facial nucleus. Weakly or not expressed in other parts of the brain.

It is found in the cell membrane. In terms of biological role, contactins mediate cell surface interactions during nervous system development. Has some neurite outgrowth-promoting activity in the cerebral cortical neurons but not in hippocampal neurons. Probably involved in neuronal activity in the auditory system. The chain is Contactin-5 (Cntn5) from Rattus norvegicus (Rat).